The primary structure comprises 191 residues: Peptidyl-tRNA hydrolase (191 aa).

Residue Tyr16 coordinates tRNA. Catalysis depends on His21, which acts as the Proton acceptor. TRNA contacts are provided by Phe67, Asn69, and Asn115.

The protein belongs to the PTH family. Monomer.

It localises to the cytoplasm. The enzyme catalyses an N-acyl-L-alpha-aminoacyl-tRNA + H2O = an N-acyl-L-amino acid + a tRNA + H(+). Its function is as follows. Hydrolyzes ribosome-free peptidyl-tRNAs (with 1 or more amino acids incorporated), which drop off the ribosome during protein synthesis, or as a result of ribosome stalling. In terms of biological role, catalyzes the release of premature peptidyl moieties from peptidyl-tRNA molecules trapped in stalled 50S ribosomal subunits, and thus maintains levels of free tRNAs and 50S ribosomes. This Ruthia magnifica subsp. Calyptogena magnifica protein is Peptidyl-tRNA hydrolase.